The chain runs to 265 residues: NAD kinase 1 (265 aa).

Catalysis depends on Asp45, which acts as the Proton acceptor. NAD(+) is bound by residues 45-46 (DG), 122-123 (NE), Arg148, Asp150, and Ala185.

It belongs to the NAD kinase family. It depends on a divalent metal cation as a cofactor.

It is found in the cytoplasm. It catalyses the reaction NAD(+) + ATP = ADP + NADP(+) + H(+). Its function is as follows. Involved in the regulation of the intracellular balance of NAD and NADP, and is a key enzyme in the biosynthesis of NADP. Catalyzes specifically the phosphorylation on 2'-hydroxyl of the adenosine moiety of NAD to yield NADP. This is NAD kinase 1 from Bacillus cereus (strain ATCC 10987 / NRS 248).